Here is a 152-residue protein sequence, read N- to C-terminus: Deoxyuridine 5'-triphosphate nucleotidohydrolase (152 aa).

Residues 71–73 (RSG), N84, 88–90 (LID), and M98 each bind substrate.

Belongs to the dUTPase family. Mg(2+) serves as cofactor.

The catalysed reaction is dUTP + H2O = dUMP + diphosphate + H(+). Its pathway is pyrimidine metabolism; dUMP biosynthesis; dUMP from dCTP (dUTP route): step 2/2. Its function is as follows. This enzyme is involved in nucleotide metabolism: it produces dUMP, the immediate precursor of thymidine nucleotides and it decreases the intracellular concentration of dUTP so that uracil cannot be incorporated into DNA. This is Deoxyuridine 5'-triphosphate nucleotidohydrolase from Shewanella amazonensis (strain ATCC BAA-1098 / SB2B).